Here is a 124-residue protein sequence, read N- to C-terminus: Fluoride-specific ion channel FluC (124 aa).

4 helical membrane-spanning segments follow: residues 5 to 25 (ILAVSIAGIAGTLLRFATGTW), 38 to 58 (TLAVNIVGCLIIGVLYGLFLL), 69 to 89 (GLIVGFVGGLTTFSSFSLDTL), and 99 to 119 (LALGYAGISVFGGLLATWAGL). Positions 76 and 79 each coordinate Na(+).

Belongs to the fluoride channel Fluc/FEX (TC 1.A.43) family.

It localises to the cell inner membrane. The catalysed reaction is fluoride(in) = fluoride(out). With respect to regulation, na(+) is not transported, but it plays an essential structural role and its presence is essential for fluoride channel function. Its function is as follows. Fluoride-specific ion channel. Important for reducing fluoride concentration in the cell, thus reducing its toxicity. This chain is Fluoride-specific ion channel FluC, found in Pseudomonas syringae pv. syringae (strain B728a).